Consider the following 239-residue polypeptide: 1-(5-phosphoribosyl)-5-[(5-phosphoribosylamino)methylideneamino] imidazole-4-carboxamide isomerase (239 aa).

The active-site Proton acceptor is Asp9. Asp131 (proton donor) is an active-site residue.

It belongs to the HisA/HisF family.

It localises to the cytoplasm. It catalyses the reaction 1-(5-phospho-beta-D-ribosyl)-5-[(5-phospho-beta-D-ribosylamino)methylideneamino]imidazole-4-carboxamide = 5-[(5-phospho-1-deoxy-D-ribulos-1-ylimino)methylamino]-1-(5-phospho-beta-D-ribosyl)imidazole-4-carboxamide. Its pathway is amino-acid biosynthesis; L-histidine biosynthesis; L-histidine from 5-phospho-alpha-D-ribose 1-diphosphate: step 4/9. In Bacteroides fragilis (strain ATCC 25285 / DSM 2151 / CCUG 4856 / JCM 11019 / LMG 10263 / NCTC 9343 / Onslow / VPI 2553 / EN-2), this protein is 1-(5-phosphoribosyl)-5-[(5-phosphoribosylamino)methylideneamino] imidazole-4-carboxamide isomerase.